A 706-amino-acid chain; its full sequence is Polyribonucleotide nucleotidyltransferase (706 aa).

The Mg(2+) site is built by Asp-486 and Asp-492. The KH domain occupies 553 to 612; that stretch reads PRIHTIKISTDKIKDVIGKGGSVIRALTEETGTTIEIEDDGTVKIASTDGEKAKHAIRRI. The 69-residue stretch at 622 to 690 folds into the S1 motif domain; sequence GRVYQGKVTR…RQGRVRLSIK (69 aa).

Belongs to the polyribonucleotide nucleotidyltransferase family. As to quaternary structure, component of the RNA degradosome, which is a multiprotein complex involved in RNA processing and mRNA degradation. Mg(2+) is required as a cofactor.

It localises to the cytoplasm. It carries out the reaction RNA(n+1) + phosphate = RNA(n) + a ribonucleoside 5'-diphosphate. Involved in mRNA degradation. Catalyzes the phosphorolysis of single-stranded polyribonucleotides processively in the 3'- to 5'-direction. In Pectobacterium carotovorum subsp. carotovorum (strain PC1), this protein is Polyribonucleotide nucleotidyltransferase.